We begin with the raw amino-acid sequence, 185 residues long: UPF0397 protein CPF_1836 (185 aa).

Helical transmembrane passes span 11-31 (IVAIGIGSAVFMILGRFGSLP), 44-64 (AFLALMALLYGPLAGFLIGFI), 71-91 (IVFFGSPWISWVFASGIVGLI), 111-131 (IFMFNLIQIIANGVAWFLVAP), and 149-169 (GVIGGISNMVTVGVLGTILIA).

This sequence belongs to the UPF0397 family.

The protein localises to the cell membrane. In Clostridium perfringens (strain ATCC 13124 / DSM 756 / JCM 1290 / NCIMB 6125 / NCTC 8237 / Type A), this protein is UPF0397 protein CPF_1836.